The following is a 350-amino-acid chain: Methionine import ATP-binding protein MetN 1 (350 aa).

The ABC transporter domain occupies 12-251 (IDLKNITVLF…PSREVTQDFV (240 aa)). 48–55 (GYSGAGKS) serves as a coordination point for ATP.

The protein belongs to the ABC transporter superfamily. Methionine importer (TC 3.A.1.24) family. In terms of assembly, the complex is composed of two ATP-binding proteins (MetN), two transmembrane proteins (MetI) and a solute-binding protein (MetQ).

The protein localises to the cell membrane. The enzyme catalyses L-methionine(out) + ATP + H2O = L-methionine(in) + ADP + phosphate + H(+). It catalyses the reaction D-methionine(out) + ATP + H2O = D-methionine(in) + ADP + phosphate + H(+). Part of the ABC transporter complex MetNIQ involved in methionine import. Responsible for energy coupling to the transport system. The protein is Methionine import ATP-binding protein MetN 1 of Oenococcus oeni (strain ATCC BAA-331 / PSU-1).